The following is a 257-amino-acid chain: Inositol diphosphatase DSP2 (257 aa).

The region spanning 66 to 251 is the Tyrosine-protein phosphatase domain; it reads NFSMVDNGIF…VSGLKHTPMS (186 aa). The 1D-myo-inositol hexakisphosphate site is built by Ile-168 and Lys-172. Cys-192 functions as the Phosphocysteine intermediate in the catalytic mechanism.

The protein belongs to the protein-tyrosine phosphatase family. Atypical dual-specificity phosphatase Siw14-like subfamily. In terms of tissue distribution, expressed in roots, leaves, stems, flowers and siliques.

The enzyme catalyses 5-diphospho-1D-myo-inositol 1,2,3,4,6-pentakisphosphate + H2O = 1D-myo-inositol hexakisphosphate + phosphate + H(+). The catalysed reaction is 1,5-bis(diphospho)-1D-myo-inositol 2,3,4,6-tetrakisphosphate + H2O = 1-diphospho-1D-myo-inositol 2,3,4,5,6-pentakisphosphate + phosphate + 2 H(+). It catalyses the reaction 3,5-bis(diphospho)-1D-myo-inositol 1,2,4,6-tetrakisphosphate + H2O = 3-diphospho-1D-myo-inositol 1,2,4,5,6-pentakisphosphate + phosphate + 2 H(+). It carries out the reaction 6-diphospho-1D-myo-inositol pentakisphosphate + H2O = 1D-myo-inositol hexakisphosphate + phosphate + H(+). Cleaves the beta-phosphate at the 5-position of soluble inositol pyrophosphates. Has highest activity on 5-diphosphoinositol 1,2,3,4,6-pentakisphosphate (5-InsP(7)), 1,5-bis-diphosphoinositol 2,3,4,6-tetrakisphosphate (1,5-InsP(8)) and 3,5-InsP(8). Possesses phosphotyrosine phosphatase activity in vitro. Dephosphorylates the phosphoinositides PI(3,5)P2. Hydrolyzes para-nitrophenyl phosphate and O-methylfluorescein phosphate in vitro. The polypeptide is Inositol diphosphatase DSP2 (Arabidopsis thaliana (Mouse-ear cress)).